The chain runs to 460 residues: Argininosuccinate lyase (460 aa).

This sequence belongs to the lyase 1 family. Argininosuccinate lyase subfamily.

The protein localises to the cytoplasm. It carries out the reaction 2-(N(omega)-L-arginino)succinate = fumarate + L-arginine. Its pathway is amino-acid biosynthesis; L-arginine biosynthesis; L-arginine from L-ornithine and carbamoyl phosphate: step 3/3. The protein is Argininosuccinate lyase of Limosilactobacillus fermentum (strain NBRC 3956 / LMG 18251) (Lactobacillus fermentum).